The sequence spans 192 residues: uncharacterized protein (192 aa).

The Nudix hydrolase domain maps to 29–160; sequence QRQAAVLIPV…PLDVYRRGNS (132 aa). The Nudix box motif lies at 67 to 89; sequence GAVDSTDASLIAAALREAQEEVA. Mg(2+)-binding residues include glutamate 83 and glutamate 87.

The protein belongs to the Nudix hydrolase family. PCD1 subfamily. Mn(2+) serves as cofactor. Requires Mg(2+) as cofactor.

Functionally, probably mediates the hydrolysis of some nucleoside diphosphate derivatives. This is an uncharacterized protein from Salmonella choleraesuis (strain SC-B67).